The chain runs to 249 residues: MTHFDRSKVTREAVAAILDATLLKPEASRDDVAALVREATELGCGAVCVSPSMLPLGSVPPSGSLGTDATLRIATVAGFPSGKHASLVKATEARYAAQLGADEIDVVIDVAAALAKDQNALLAELITVREAVPHPLVLKVIVESALLDEEQLRTAVRACVQAGADYVKTSTGFHPAGGASVEAVSIMADELRKLGKLAPFGMGEEERVAAGLVGIKASGGIRDWDAALDMIEAGATRLGVSAAAKVLGA.

D105 serves as the catalytic Proton donor/acceptor. K168 serves as the catalytic Schiff-base intermediate with acetaldehyde. K216 acts as the Proton donor/acceptor in catalysis.

The protein belongs to the DeoC/FbaB aldolase family. DeoC type 1 subfamily.

Its subcellular location is the cytoplasm. The enzyme catalyses 2-deoxy-D-ribose 5-phosphate = D-glyceraldehyde 3-phosphate + acetaldehyde. Its pathway is carbohydrate degradation; 2-deoxy-D-ribose 1-phosphate degradation; D-glyceraldehyde 3-phosphate and acetaldehyde from 2-deoxy-alpha-D-ribose 1-phosphate: step 2/2. Its function is as follows. Catalyzes a reversible aldol reaction between acetaldehyde and D-glyceraldehyde 3-phosphate to generate 2-deoxy-D-ribose 5-phosphate. This is Deoxyribose-phosphate aldolase from Corynebacterium jeikeium (strain K411).